The following is a 616-amino-acid chain: Zinc metalloproteinase nas-36 (616 aa).

Residues M1–A21 form the signal peptide. Positions Q22 to R125 are excised as a propeptide. Positions S126 to K321 constitute a Peptidase M12A domain. Cystine bridges form between C168-C320, C191-C210, C324-C345, C347-C356, C367-C396, C424-C444, C518-C549, C522-C554, and C534-C539. N173 is a glycosylation site (N-linked (GlcNAc...) asparagine). H218 provides a ligand contact to Zn(2+). E219 is a catalytic residue. Zn(2+)-binding residues include H222 and H228. The EGF-like domain occupies N316 to E357. Residues C367 to T481 form the CUB domain. One can recognise a TSP type-1 domain in the interval P506 to P555.

The cofactor is Zn(2+).

It is found in the secreted. Its function is as follows. Mtalloprotease. Involved in molting, a process during larval stages in which a new cuticle is formed and the old cuticle is shed. The polypeptide is Zinc metalloproteinase nas-36 (Caenorhabditis briggsae).